The sequence spans 191 residues: SCO2-like protein RP031 (191 aa).

This sequence belongs to the SCO1/2 family.

This chain is SCO2-like protein RP031, found in Rickettsia prowazekii (strain Madrid E).